The chain runs to 532 residues: uncharacterized protein (532 aa).

Transmembrane regions (helical) follow at residues 25-45, 65-85, 109-129, 134-154, 179-199, 203-223, 248-268, 302-322, 344-364, 371-391, 392-412, 425-445, 459-479, and 494-514; these read ITKI…GDVG, SGFP…NHHT, AVPI…QVAA, LFPF…MLPS, KGAS…AGSL, IILG…RQNE, LLLF…SGGE, VPYI…EKIT, KPVN…QVFS, SLAV…FPAI, AVGA…PRYG, AAVA…DKLR, SAVL…TGRG, and AVFI…LNSV.

The protein belongs to the polysaccharide synthase family.

The protein localises to the cell membrane. This is an uncharacterized protein from Bacillus subtilis (strain 168).